We begin with the raw amino-acid sequence, 566 residues long: Proline--tRNA ligase 1 (566 aa).

It belongs to the class-II aminoacyl-tRNA synthetase family. ProS type 1 subfamily. As to quaternary structure, homodimer.

The protein resides in the cytoplasm. The catalysed reaction is tRNA(Pro) + L-proline + ATP = L-prolyl-tRNA(Pro) + AMP + diphosphate. In terms of biological role, catalyzes the attachment of proline to tRNA(Pro) in a two-step reaction: proline is first activated by ATP to form Pro-AMP and then transferred to the acceptor end of tRNA(Pro). As ProRS can inadvertently accommodate and process non-cognate amino acids such as alanine and cysteine, to avoid such errors it has two additional distinct editing activities against alanine. One activity is designated as 'pretransfer' editing and involves the tRNA(Pro)-independent hydrolysis of activated Ala-AMP. The other activity is designated 'posttransfer' editing and involves deacylation of mischarged Ala-tRNA(Pro). The misacylated Cys-tRNA(Pro) is not edited by ProRS. The protein is Proline--tRNA ligase 1 of Bacillus cereus (strain ATCC 14579 / DSM 31 / CCUG 7414 / JCM 2152 / NBRC 15305 / NCIMB 9373 / NCTC 2599 / NRRL B-3711).